Here is a 500-residue protein sequence, read N- to C-terminus: Probable malate:quinone oxidoreductase (500 aa).

This sequence belongs to the MQO family. FAD serves as cofactor.

It catalyses the reaction (S)-malate + a quinone = a quinol + oxaloacetate. Its pathway is carbohydrate metabolism; tricarboxylic acid cycle; oxaloacetate from (S)-malate (quinone route): step 1/1. The polypeptide is Probable malate:quinone oxidoreductase (Gluconobacter oxydans (strain 621H) (Gluconobacter suboxydans)).